Here is a 213-residue protein sequence, read N- to C-terminus: Orotate phosphoribosyltransferase (213 aa).

Position 26 (K26) interacts with 5-phospho-alpha-D-ribose 1-diphosphate. Residue 34 to 35 coordinates orotate; it reads FF. 5-phospho-alpha-D-ribose 1-diphosphate-binding positions include 72 to 73, R99, K100, K103, H105, and 124 to 132; these read YK and DDVITAGTA. T128 and R156 together coordinate orotate.

The protein belongs to the purine/pyrimidine phosphoribosyltransferase family. PyrE subfamily. As to quaternary structure, homodimer. It depends on Mg(2+) as a cofactor.

The enzyme catalyses orotidine 5'-phosphate + diphosphate = orotate + 5-phospho-alpha-D-ribose 1-diphosphate. Its pathway is pyrimidine metabolism; UMP biosynthesis via de novo pathway; UMP from orotate: step 1/2. Functionally, catalyzes the transfer of a ribosyl phosphate group from 5-phosphoribose 1-diphosphate to orotate, leading to the formation of orotidine monophosphate (OMP). This chain is Orotate phosphoribosyltransferase, found in Pseudomonas savastanoi pv. phaseolicola (strain 1448A / Race 6) (Pseudomonas syringae pv. phaseolicola (strain 1448A / Race 6)).